A 370-amino-acid chain; its full sequence is Sphingosine 1-phosphate receptor 2 (370 aa).

Residues methionine 1–asparagine 57 lie on the Extracellular side of the membrane. A glycan (N-linked (GlcNAc...) asparagine) is linked at asparagine 24. Residues isoleucine 58–valine 78 traverse the membrane as a helical segment. Over phenylalanine 79–alanine 87 the chain is Cytoplasmic. A helical transmembrane segment spans residues methionine 88–alanine 108. At asparagine 109–arginine 128 the chain is on the extracellular side. Residues glutamate 129–glutamate 149 traverse the membrane as a helical segment. Over arginine 150–arginine 167 the chain is Cytoplasmic. Residues methionine 168–isoleucine 193 form a helical membrane-spanning segment. At asparagine 194–serine 219 the chain is on the extracellular side. The helical transmembrane segment at isoleucine 220–valine 230 threads the bilayer. Topologically, residues arginine 231 to threonine 254 are cytoplasmic. Residues valine 255–leucine 275 form a helical membrane-spanning segment. Over aspartate 276–asparagine 289 the chain is Extracellular. Residues alanine 290–leucine 310 traverse the membrane as a helical segment. The Cytoplasmic portion of the chain corresponds to arginine 311–valine 370. A lipid anchor (S-palmitoyl cysteine) is attached at cysteine 325.

This sequence belongs to the G-protein coupled receptor 1 family.

Its subcellular location is the cell membrane. In terms of biological role, receptor for the lysosphingolipid sphingosine 1-phosphate (S1P). S1P receptor is critical for cell migration and epithelial integrity during vertebrate embryogenesis. Receptor for the chemokine-like protein FAM19A5. Mediates the inhibitory effect of FAM19A5 on vascular smooth muscle cell proliferation and migration. This is Sphingosine 1-phosphate receptor 2 (s1pr2) from Danio rerio (Zebrafish).